The sequence spans 499 residues: UDP-N-acetylmuramoyl-L-alanyl-D-glutamate--2,6-diaminopimelate ligase (499 aa).

UDP-N-acetyl-alpha-D-muramoyl-L-alanyl-D-glutamate-binding residues include leucine 30 and serine 32. An ATP-binding site is contributed by 122–128; sequence GTNGKTT. Residues 164–165, serine 191, glutamine 197, and arginine 199 each bind UDP-N-acetyl-alpha-D-muramoyl-L-alanyl-D-glutamate; that span reads TT. Lysine 231 bears the N6-carboxylysine mark. Meso-2,6-diaminopimelate is bound by residues arginine 397, 421–424, glycine 472, and glutamate 476; that span reads DNPR. A Meso-diaminopimelate recognition motif motif is present at residues 421-424; the sequence is DNPR.

Belongs to the MurCDEF family. MurE subfamily. The cofactor is Mg(2+). Carboxylation is probably crucial for Mg(2+) binding and, consequently, for the gamma-phosphate positioning of ATP.

Its subcellular location is the cytoplasm. The catalysed reaction is UDP-N-acetyl-alpha-D-muramoyl-L-alanyl-D-glutamate + meso-2,6-diaminopimelate + ATP = UDP-N-acetyl-alpha-D-muramoyl-L-alanyl-gamma-D-glutamyl-meso-2,6-diaminopimelate + ADP + phosphate + H(+). Its pathway is cell wall biogenesis; peptidoglycan biosynthesis. Its function is as follows. Catalyzes the addition of meso-diaminopimelic acid to the nucleotide precursor UDP-N-acetylmuramoyl-L-alanyl-D-glutamate (UMAG) in the biosynthesis of bacterial cell-wall peptidoglycan. In Blochmanniella floridana, this protein is UDP-N-acetylmuramoyl-L-alanyl-D-glutamate--2,6-diaminopimelate ligase.